Consider the following 64-residue polypeptide: Temporin-ALe (64 aa).

The signal sequence occupies residues Met1–Cys22. Positions Glu23 to Phe47 are excised as a propeptide. Residue Leu62 is modified to Leucine amide.

As to expression, expressed by the skin glands.

Its subcellular location is the secreted. Antimicrobial peptide with activity against Gram-positive and Gram-negative bacteria and against fungi. Has been tested against S.aureus (MIC=1.25 ug/mL), B.pumilus (MIC=5.0 ug/mL), B.cereus (MIC=15.0 ug/mL), E.coli (MIC=1.25 ug/mL), B.dysenteriae (MIC=5.0 ug/mL), A.cacoaceticus (MIC=15.0 ug/mL), P.aeruginosa (MIC=5.0 ug/mL) and C.albicans (MIC=1.25 ug/mL). Also shows a weak hemolytic activity. In Amolops loloensis (Lolokou Sucker Frog), this protein is Temporin-ALe.